The primary structure comprises 761 residues: Coenzyme PQQ synthesis protein F (761 aa).

Residue His49 coordinates Zn(2+). The active-site Proton acceptor is the Glu52. Residues His53 and Glu130 each contribute to the Zn(2+) site.

Belongs to the peptidase M16 family. The cofactor is Zn(2+).

It functions in the pathway cofactor biosynthesis; pyrroloquinoline quinone biosynthesis. Functionally, required for coenzyme pyrroloquinoline quinone (PQQ) biosynthesis. It is thought that this protein is a protease that cleaves peptides bond in a small peptide (gene pqqA), providing the glutamate and tyrosine residues which are necessary for the synthesis of PQQ. The chain is Coenzyme PQQ synthesis protein F (pqqF) from Klebsiella pneumoniae.